A 156-amino-acid chain; its full sequence is Ribosomal RNA large subunit methyltransferase H (156 aa).

S-adenosyl-L-methionine-binding positions include leucine 73, glycine 104, and 123–128 (LSDLTL).

Belongs to the RNA methyltransferase RlmH family. As to quaternary structure, homodimer.

It localises to the cytoplasm. The catalysed reaction is pseudouridine(1915) in 23S rRNA + S-adenosyl-L-methionine = N(3)-methylpseudouridine(1915) in 23S rRNA + S-adenosyl-L-homocysteine + H(+). In terms of biological role, specifically methylates the pseudouridine at position 1915 (m3Psi1915) in 23S rRNA. In Methylibium petroleiphilum (strain ATCC BAA-1232 / LMG 22953 / PM1), this protein is Ribosomal RNA large subunit methyltransferase H.